A 179-amino-acid polypeptide reads, in one-letter code: Replication restart protein DnaT (179 aa).

Over residues 151–168 (SRSSNGGMPQRDINSVSE) the composition is skewed to polar residues. Positions 151–179 (SRSSNGGMPQRDINSVSEPDNHIPPGFRG) are disordered.

Belongs to the DnaT family. In terms of assembly, homooligomerizes. Interacts with PriB. Component of the replication restart primosome. Primosome assembly occurs via a 'hand-off' mechanism. PriA binds to replication forks, subsequently PriB then DnaT bind; DnaT then displaces ssDNA to generate the helicase loading substrate.

Its function is as follows. Involved in the restart of stalled replication forks, which reloads the replicative helicase on sites other than the origin of replication. Can function in multiple replication restart pathways. Displaces ssDNA from a PriB-ssDNA complex. Probably forms a spiral filament on ssDNA. The chain is Replication restart protein DnaT from Salmonella arizonae (strain ATCC BAA-731 / CDC346-86 / RSK2980).